Reading from the N-terminus, the 359-residue chain is uncharacterized protein (359 aa).

One can recognise a Protein kinase domain in the interval 43-309 (YHLIRKLGSG…VLDFLGDDWG (267 aa)). ATP is bound by residues 49 to 57 (LGSGSYGRV) and lysine 72. The active-site Proton acceptor is aspartate 163. The tract at residues 314-359 (REGPGVLGSAVSYEDREEGGSSLEEWTDEGDDSKSGGRTGTDGGAP) is disordered. The span at 350–359 (GRTGTDGGAP) shows a compositional bias: gly residues.

Belongs to the protein kinase superfamily. Ser/Thr protein kinase family. STKL subfamily.

It carries out the reaction L-seryl-[protein] + ATP = O-phospho-L-seryl-[protein] + ADP + H(+). It catalyses the reaction L-threonyl-[protein] + ATP = O-phospho-L-threonyl-[protein] + ADP + H(+). This is an uncharacterized protein from Homo sapiens (Human).